Here is a 194-residue protein sequence, read N- to C-terminus: Orotate phosphoribosyltransferase (194 aa).

116 to 124 (EDIVTTGLS) contacts 5-phospho-alpha-D-ribose 1-diphosphate. Orotate is bound by residues threonine 120 and arginine 148.

This sequence belongs to the purine/pyrimidine phosphoribosyltransferase family. PyrE subfamily. In terms of assembly, homodimer. The cofactor is Mg(2+).

The catalysed reaction is orotidine 5'-phosphate + diphosphate = orotate + 5-phospho-alpha-D-ribose 1-diphosphate. It participates in pyrimidine metabolism; UMP biosynthesis via de novo pathway; UMP from orotate: step 1/2. In terms of biological role, catalyzes the transfer of a ribosyl phosphate group from 5-phosphoribose 1-diphosphate to orotate, leading to the formation of orotidine monophosphate (OMP). The protein is Orotate phosphoribosyltransferase of Phenylobacterium zucineum (strain HLK1).